Consider the following 1933-residue polypeptide: Protein TIC 214 (1933 aa).

A run of 6 helical transmembrane segments spans residues 18-38 (IVNS…FSIG), 60-80 (ATTG…YAPL), 87-107 (PHTI…FYTD), 128-148 (FSIQ…HFIL), 176-196 (VGWL…LVWI), and 230-250 (IFYI…PAPL). Disordered regions lie at residues 266–291 (AKGK…VGVG), 473–514 (KTKS…SRDN), 808–832 (THRE…AEDP), and 1066–1121 (ESFT…SSNA). The span at 278–289 (EEGDVEKEDEVG) shows a compositional bias: acidic residues. The segment covering 476 to 487 (SLSPEKTSGDNL) has biased composition (polar residues). Basic and acidic residues-rich tracts occupy residues 488-514 (ETSR…SRDN) and 819-832 (DEKN…AEDP). A compositionally biased stretch (polar residues) spans 1066–1078 (ESFTQISSPSSTN). A compositionally biased stretch (basic residues) spans 1105 to 1115 (KEKKKKKRSLK). A helical transmembrane segment spans residues 1135–1155 (LPVYLKLFIQRIYTGIFFSII). The segment at 1562 to 1642 (NADNEKNEKK…SAESTTKKVT (81 aa)) is disordered. Basic and acidic residues predominate over residues 1564 to 1642 (DNEKNEKKEA…SAESTTKKVT (79 aa)).

Belongs to the TIC214 family. Part of the Tic complex.

It is found in the plastid. The protein resides in the chloroplast inner membrane. Its function is as follows. Involved in protein precursor import into chloroplasts. May be part of an intermediate translocation complex acting as a protein-conducting channel at the inner envelope. The protein is Protein TIC 214 of Jasminum nudiflorum (Winter jasmine).